Here is an 86-residue protein sequence, read N- to C-terminus: Elongation factor 1-beta (86 aa).

It belongs to the EF-1-beta/EF-1-delta family.

Its function is as follows. Promotes the exchange of GDP for GTP in EF-1-alpha/GDP, thus allowing the regeneration of EF-1-alpha/GTP that could then be used to form the ternary complex EF-1-alpha/GTP/AAtRNA. The chain is Elongation factor 1-beta from Methanocorpusculum labreanum (strain ATCC 43576 / DSM 4855 / Z).